Reading from the N-terminus, the 361-residue chain is MMDSPKKLGYHMPAEYEPHHGTLMIWPTRPGSWPFQGKAAKRAFTQIIETIAEGERVYLLVEQAYLSEAQSYLGDKVVYLDIPTNDAWARDTGPTILVNDKGKKLAVDWAFNAWGGTYDGLYQDYEEDDQVASRFAEALGRPVYDAKPFVLEGGAIHSDGQGTILVTESCLLSPGRNPNLTKEEIENTLLESLGAEKVIWLPYGIYQDETNEHVDNVAAFVGPAELVLAWTDDENDPQYAMSKADLELLEQETDAKGCHFTIHKLPIPAVRQVVTEEDLPGYIYEEGEEKRYAGERLAASYVNFYIANKAVLVPQFEDVNDQVALDILSKCFPDRKVVGIPARDILLGGGNIHCITQQIPE.

The active-site Amidino-cysteine intermediate is the C354.

It belongs to the agmatine deiminase family.

The enzyme catalyses agmatine + H2O = N-carbamoylputrescine + NH4(+). This chain is Putative agmatine deiminase, found in Streptococcus pneumoniae (strain P1031).